A 441-amino-acid polypeptide reads, in one-letter code: Probable indole-3-acetic acid-amido synthetase GH3.9 (441 aa).

This sequence belongs to the IAA-amido conjugating enzyme family. In terms of tissue distribution, expressed in etiolated seedlings and roots.

May catalyze the synthesis of indole-3-acetic acid (IAA)-amino acid conjugates, providing a mechanism for the plant to cope with the presence of excess auxin. This Oryza sativa subsp. japonica (Rice) protein is Probable indole-3-acetic acid-amido synthetase GH3.9 (GH3.9).